The chain runs to 151 residues: 3-hydroxyacyl-[acyl-carrier-protein] dehydratase FabZ (151 aa).

Residue His57 is part of the active site.

It belongs to the thioester dehydratase family. FabZ subfamily.

The protein resides in the cytoplasm. The catalysed reaction is a (3R)-hydroxyacyl-[ACP] = a (2E)-enoyl-[ACP] + H2O. Functionally, involved in unsaturated fatty acids biosynthesis. Catalyzes the dehydration of short chain beta-hydroxyacyl-ACPs and long chain saturated and unsaturated beta-hydroxyacyl-ACPs. This Tolumonas auensis (strain DSM 9187 / NBRC 110442 / TA 4) protein is 3-hydroxyacyl-[acyl-carrier-protein] dehydratase FabZ.